Reading from the N-terminus, the 210-residue chain is Redox-sensing transcriptional repressor Rex (210 aa).

The H-T-H motif DNA-binding region spans 17 to 56 (SYLHLVKKAEADKLEYISGTVIAEELELEPIQVRKDLTIT). Residue 91–96 (GAGSLG) participates in NAD(+) binding.

It belongs to the transcriptional regulatory Rex family. As to quaternary structure, homodimer.

It localises to the cytoplasm. Modulates transcription in response to changes in cellular NADH/NAD(+) redox state. The polypeptide is Redox-sensing transcriptional repressor Rex (Treponema denticola (strain ATCC 35405 / DSM 14222 / CIP 103919 / JCM 8153 / KCTC 15104)).